The primary structure comprises 362 residues: Anthranilate phosphoribosyltransferase (362 aa).

5-phospho-alpha-D-ribose 1-diphosphate contacts are provided by residues Gly-96, 99–100 (GD), Thr-104, 106–109 (NIST), 124–132 (KHGNRAASS), and Gly-136. An anthranilate-binding site is contributed by Gly-96. Ser-108 lines the Mg(2+) pocket. Residue Asn-127 coordinates anthranilate. Arg-182 is a binding site for anthranilate. Residues Asp-240 and Glu-241 each coordinate Mg(2+).

This sequence belongs to the anthranilate phosphoribosyltransferase family. Homodimer. Mg(2+) serves as cofactor.

It carries out the reaction N-(5-phospho-beta-D-ribosyl)anthranilate + diphosphate = 5-phospho-alpha-D-ribose 1-diphosphate + anthranilate. Its pathway is amino-acid biosynthesis; L-tryptophan biosynthesis; L-tryptophan from chorismate: step 2/5. Catalyzes the transfer of the phosphoribosyl group of 5-phosphorylribose-1-pyrophosphate (PRPP) to anthranilate to yield N-(5'-phosphoribosyl)-anthranilate (PRA). In Rhodococcus opacus (strain B4), this protein is Anthranilate phosphoribosyltransferase.